We begin with the raw amino-acid sequence, 254 residues long: Leucyl/phenylalanyl-tRNA--protein transferase (254 aa).

This sequence belongs to the L/F-transferase family.

Its subcellular location is the cytoplasm. The enzyme catalyses N-terminal L-lysyl-[protein] + L-leucyl-tRNA(Leu) = N-terminal L-leucyl-L-lysyl-[protein] + tRNA(Leu) + H(+). It catalyses the reaction N-terminal L-arginyl-[protein] + L-leucyl-tRNA(Leu) = N-terminal L-leucyl-L-arginyl-[protein] + tRNA(Leu) + H(+). The catalysed reaction is L-phenylalanyl-tRNA(Phe) + an N-terminal L-alpha-aminoacyl-[protein] = an N-terminal L-phenylalanyl-L-alpha-aminoacyl-[protein] + tRNA(Phe). Functions in the N-end rule pathway of protein degradation where it conjugates Leu, Phe and, less efficiently, Met from aminoacyl-tRNAs to the N-termini of proteins containing an N-terminal arginine or lysine. This is Leucyl/phenylalanyl-tRNA--protein transferase from Burkholderia cenocepacia (strain ATCC BAA-245 / DSM 16553 / LMG 16656 / NCTC 13227 / J2315 / CF5610) (Burkholderia cepacia (strain J2315)).